Consider the following 336-residue polypeptide: DNA repair protein XRCC4 (336 aa).

Residues 1–213 (MERKISRIHL…EREKDIKQEG (213 aa)) are interaction with IFFO1. At Ser-53 the chain carries Phosphoserine; by PRKDC. Coiled coils occupy residues 131-165 (LDTIAENQAKNEHLQKENERLLRDWNDVQGRFEKC) and 184-212 (LNEKKTKIRSLHNKLLNAAQEREKDIKQE). Positions 180–213 (FILVLNEKKTKIRSLHNKLLNAAQEREKDIKQEG) are interaction with LIG4. Phosphoserine; by PRKDC is present on Ser-193. A Glycyl lysine isopeptide (Lys-Gly) (interchain with G-Cter in SUMO) cross-link involves residue Lys-210. A disordered region spans residues 212–249 (EGETAICSEMTADRDPVYDESTDEESENQTDLSGLASA). Tyr-229 carries the post-translational modification Phosphotyrosine. Over residues 229–239 (YDESTDEESEN) the composition is skewed to acidic residues. The residue at position 232 (Ser-232) is a Phosphoserine. Thr-233 is subject to Phosphothreonine; by CK2. Phosphoserine occurs at positions 237 and 256. Ser-260 is subject to Phosphoserine; by PRKDC. The tract at residues 264–336 (TDIAPSRKRR…SSPEDLFDEI (73 aa)) is disordered. The Nuclear localization signal signature appears at 270-275 (RKRRQR). Lys-296 participates in a covalent cross-link: Glycyl lysine isopeptide (Lys-Gly) (interchain with G-Cter in ubiquitin). 4 positions are modified to phosphoserine; by PRKDC: Ser-303, Ser-304, Ser-315, and Ser-320. Polar residues predominate over residues 317–329 (ENMSLETLRNSSP). Residue Thr-323 is modified to Phosphothreonine; by PRKDC. Residues Ser-327 and Ser-328 each carry the phosphoserine; by PRKDC modification.

It belongs to the XRCC4-XLF family. XRCC4 subfamily. Homodimer and homotetramer in solution. Interacts with NHEJ1/XLF; the interaction is direct and is mediated via a head-to-head interaction between N-terminal head regions. Interacts with LIG4; the LIG4-XRCC4 subcomplex has a 1:2 stoichiometry and XRCC4 is required for LIG4 stability. Component of the core long-range non-homologous end joining (NHEJ) complex (also named DNA-PK complex) composed of PRKDC, LIG4, XRCC4, XRCC6/Ku70, XRCC5/Ku86 and NHEJ1/XLF. Additional component of the NHEJ complex includes PAXX. Following autophosphorylation, PRKDC dissociates from DNA, leading to formation of the short-range NHEJ complex, composed of LIG4, XRCC4, XRCC6/Ku70, XRCC5/Ku86 and NHEJ1/XLF. Interacts with PRKDC; the interaction is direct. Interacts with XRCC6/Ku70; the interaction is direct. Interacts with APTX and APLF. Forms a heterotetramer with IFFO1; the interaction involves LIG4-free XRCC4 and leads to the relocalization of IFFO1 to the sites of DNA damage. Interacts with PNKP; mainly interacts with PNKP when phosphorylated at Thr-233, but is also able to interact at much lower level with PNKP when not unphosphorylated. Interacts with POLL (DNA polymerase lambda). In terms of assembly, interacts with XKR4; interacts with the processed form of XKR4, which is cleaved by caspase. In terms of processing, phosphorylated by PRKDC at the C-terminus in response to DNA damage; Ser-260 and Ser-320 constitute the main phosphorylation sites. Phosphorylations by PRKDC at the C-terminus of XRCC4 and NHEJ1/XLF are highly redundant and regulate ability of the XRCC4-NHEJ1/XLF subcomplex to bridge DNA. Phosphorylation by PRKDC does not prevent interaction with NHEJ1/XLF but disrupts ability to bridge DNA and promotes detachment from DNA. Phosphorylation at Ser-327 and Ser-328 by PRKDC promotes recognition by the SCF(FBXW7) complex and subsequent ubiquitination via 'Lys-63'-linked ubiquitin. Phosphorylation at Thr-233 by CK2 promotes interaction with PNKP; regulating PNKP activity and localization to DNA damage sites. Phosphorylation by CK2 promotes interaction with APTX. Post-translationally, ubiquitinated at Lys-296 by the SCF(FBXW7) complex via 'Lys-63'-linked ubiquitination, thereby promoting double-strand break repair: the SCF(FBXW7) complex specifically recognizes XRCC4 when phosphorylated at Ser-327 and Ser-328 by PRKDC, and 'Lys-63'-linked ubiquitination facilitates DNA non-homologous end joining (NHEJ) by enhancing association with XRCC5/Ku80 and XRCC6/Ku70. Monoubiquitinated. Undergoes proteolytic processing by caspase-3 (CASP3). This generates the protein XRCC4, C-terminus (XRCC4/C), which translocates to the cytoplasm and activates phospholipid scramblase activity of XKR4, thereby promoting phosphatidylserine exposure on apoptotic cell surface. Widely expressed.

The protein localises to the nucleus. It is found in the chromosome. It localises to the cytoplasm. Its function is as follows. DNA non-homologous end joining (NHEJ) core factor, required for double-strand break repair and V(D)J recombination. Acts as a scaffold protein that regulates recruitment of other proteins to DNA double-strand breaks (DSBs). Associates with NHEJ1/XLF to form alternating helical filaments that bridge DNA and act like a bandage, holding together the broken DNA until it is repaired. The XRCC4-NHEJ1/XLF subcomplex binds to the DNA fragments of a DSB in a highly diffusive manner and robustly bridges two independent DNA molecules, holding the broken DNA fragments in close proximity to one other. The mobility of the bridges ensures that the ends remain accessible for further processing by other repair factors. Plays a key role in the NHEJ ligation step of the broken DNA during DSB repair via direct interaction with DNA ligase IV (LIG4): the LIG4-XRCC4 subcomplex reseals the DNA breaks after the gap filling is completed. XRCC4 stabilizes LIG4, regulates its subcellular localization and enhances LIG4's joining activity. Binding of the LIG4-XRCC4 subcomplex to DNA ends is dependent on the assembly of the DNA-dependent protein kinase complex DNA-PK to these DNA ends. Promotes displacement of PNKP from processed strand break termini. Acts as an activator of the phospholipid scramblase activity of XKR4. This form, which is generated upon caspase-3 (CASP3) cleavage, translocates into the cytoplasm and interacts with XKR4, thereby promoting phosphatidylserine scramblase activity of XKR4 and leading to phosphatidylserine exposure on apoptotic cell surface. This chain is DNA repair protein XRCC4, found in Homo sapiens (Human).